We begin with the raw amino-acid sequence, 738 residues long: Alanine--tRNA ligase (738 aa).

4 residues coordinate Zn(2+): His-564, His-568, Cys-666, and His-670.

This sequence belongs to the class-II aminoacyl-tRNA synthetase family. Homotetramer. Requires Zn(2+) as cofactor.

It is found in the cytoplasm. It catalyses the reaction tRNA(Ala) + L-alanine + ATP = L-alanyl-tRNA(Ala) + AMP + diphosphate. Catalyzes the attachment of alanine to tRNA(Ala) in a two-step reaction: alanine is first activated by ATP to form Ala-AMP and then transferred to the acceptor end of tRNA(Ala). Also edits incorrectly charged Ser-tRNA(Ala) and Gly-tRNA(Ala) via its editing domain. The polypeptide is Alanine--tRNA ligase (alaS) (Yersinia pestis bv. Antiqua (strain Antiqua)).